A 530-amino-acid polypeptide reads, in one-letter code: MIQRINALSLSSGLNWFVTSLKIHGNNLKTLKQSHCYMIITGLNRDNLNVAKFIEACSNAGHLRYAYSVFTHQPCPNTYLHNTMIRALSLLDEPNAHSIAITVYRKLWALCAKPDTFTFPFVLKIAVRVSDVWFGRQIHGQVVVFGFDSSVHVVTGLIQMYFSCGGLGDARKMFDEMLVKDVNVWNALLAGYGKVGEMDEARSLLEMMPCWVRNEVSWTCVISGYAKSGRASEAIEVFQRMLMENVEPDEVTLLAVLSACADLGSLELGERICSYVDHRGMNRAVSLNNAVIDMYAKSGNITKALDVFECVNERNVVTWTTIIAGLATHGHGAEALAMFNRMVKAGVRPNDVTFIAILSACSHVGWVDLGKRLFNSMRSKYGIHPNIEHYGCMIDLLGRAGKLREADEVIKSMPFKANAAIWGSLLAASNVHHDLELGERALSELIKLEPNNSGNYMLLANLYSNLGRWDESRMMRNMMKGIGVKKMAGESSIEVENRVYKFISGDLTHPQVERIHEILQEMDLQIQSKV.

PPR repeat units lie at residues 77–114 (NTYL…CAKP), 115–149 (DTFT…GFDS), 150–180 (SVHV…MLVK), 181–211 (DVNV…MPCW), 214–248 (NEVS…NVEP), 249–283 (DEVT…GMNR), 284–314 (AVSL…VNER), 315–349 (NVVT…GVRP), 350–380 (NDVT…MRSK), and 386–420 (NIEH…ANAA). Residues 421–496 (IWGSLLAASN…MAGESSIEVE (76 aa)) form a type E motif region. The type E(+) motif stretch occupies residues 497–527 (NRVYKFISGDLTHPQVERIHEILQEMDLQIQ).

The protein belongs to the PPR family. PCMP-E subfamily.

This Arabidopsis thaliana (Mouse-ear cress) protein is Pentatricopeptide repeat-containing protein At5g56310 (PCMP-E13).